The sequence spans 1098 residues: Ubiquitin carboxyl-terminal hydrolase 36 (1098 aa).

The segment covering 72 to 86 has biased composition (basic and acidic residues); it reads RHRSGDELQARKPGT. The interval 72–97 is disordered; sequence RHRSGDELQARKPGTERVSGSGGDGV. Positions 122–423 constitute a USP domain; sequence AGLHNLGNTC…QAYVLFYLRI (302 aa). C131 serves as the catalytic Nucleophile. The active-site Proton acceptor is the H382. 2 disordered regions span residues 428 to 464 and 483 to 574; these read KSPEGPVSRVGATLPSRPKVVPEHSKKSPGNGVVPSP and EVGV…RDTI. A phosphoserine mark is found at S429, S463, S547, and S578. Positions 540–558 are enriched in low complexity; sequence PLQSLTTSPTTSQGSPGTG. Residues 589-640 form a disordered region; that stretch reads GHRLKGEGSGVDLEKGDSSSSSPEHSASSDPAKAPQTAESRAAHACDSQGTN. Positions 606 to 617 are enriched in low complexity; the sequence is SSSSSPEHSASS. The residue at position 663 (S663) is a Phosphoserine. Disordered regions lie at residues 664 to 710 and 722 to 973; these read PALS…SPSA and HPVV…ALSV. Residues 665-677 show a composition bias toward polar residues; sequence ALSSTTTEPTSLM. Phosphoserine is present on S678. The segment covering 683–692 has biased composition (low complexity); it reads KKLALSAKKA. S709 is modified (phosphoserine). Positions 746–763 are enriched in low complexity; it reads HPHSASLSSSSAKPLGTS. A compositionally biased stretch (polar residues) spans 853–878; it reads GQFQDQSWSSGSQKEEGTQPQVNGHQ. Basic residues predominate over residues 889–898; that stretch reads SSRKRRKRKR. Residues 901–917 are compositionally biased toward polar residues; it reads GLSQEATPSQDLIQHSC. Residues 921–932 are compositionally biased toward basic and acidic residues; sequence DHSEPEARTELQ. The segment covering 933–943 has biased composition (basic residues); the sequence is KKKKKKRRKRK. Basic and acidic residues predominate over residues 944–960; that stretch reads PEPQQDEESKHPGDQRS.

This sequence belongs to the peptidase C19 family. As to quaternary structure, interacts with isoform 3 of FBXW7; the interaction inhibits MYC degradation induced by SCF(FBW7) complex. Interacts with NTRK1; USP36 does not deubiquitinate NTRK1. Interacts with NEDD4L (via domains WW1, 3 and 4); the interaction inhibits ubiquitination of, at least, NTRK1, KCNQ2 and KCNQ3 by NEDD4L. Interacts (via C-terminus) with EXOSC10 (via C-terminus); the interaction is facilitated by the association with RNA and promotes sumoylation of EXOSC10. Post-translationally, polyubiquitinated by NEDD4L, no effect on USP36 protein levels. Both proteins interact with and regulate each other's ubiquitination levels.

Its subcellular location is the nucleus. The protein resides in the nucleolus. It localises to the cytoplasm. The catalysed reaction is Thiol-dependent hydrolysis of ester, thioester, amide, peptide and isopeptide bonds formed by the C-terminal Gly of ubiquitin (a 76-residue protein attached to proteins as an intracellular targeting signal).. Deubiquitinase essential for the regulation of nucleolar structure and function. Required for cell and organism viability. Plays an important role in ribosomal RNA processing and protein synthesis, which is mediated, at least in part, through deubiquitination of DHX33, NPM1 and FBL, regulating their protein stability. Functions as a transcriptional repressor by deubiquiting histone H2B at the promoters of genes critical for cellular differentiation, such as CDKN1A, thereby preventing histone H3 'Lys-4' trimethylation (H3K4). Specifically deubiquitinates MYC in the nucleolus, leading to prevent MYC degradation by the proteasome: acts by specifically interacting with isoform 3 of FBXW7 (FBW7gamma) in the nucleolus and counteracting ubiquitination of MYC by the SCF(FBW7) complex. In contrast, it does not interact with isoform 1 of FBXW7 (FBW7alpha) in the nucleoplasm. Interacts to and regulates the actions of E3 ubiquitin-protein ligase NEDD4L over substrates such as NTRK1, KCNQ2 and KCNQ3, affecting their expression an functions. Deubiquitinates SOD2, regulates SOD2 protein stability. Deubiquitinase activity is required to control selective autophagy activation by ubiquitinated proteins. Promotes CEP63 stabilization through 'Lys-48'-linked deubiquitination leading to increased stability. Acts as a SUMO ligase to promote EXOSC10 sumoylation critical for the nucleolar RNA exosome function in rRNA processing. Binds to pre-rRNAs. The chain is Ubiquitin carboxyl-terminal hydrolase 36 (Usp36) from Mus musculus (Mouse).